The primary structure comprises 494 residues: Aspartyl/glutamyl-tRNA(Asn/Gln) amidotransferase subunit B (494 aa).

The protein belongs to the GatB/GatE family. GatB subfamily. As to quaternary structure, heterotrimer of A, B and C subunits.

It carries out the reaction L-glutamyl-tRNA(Gln) + L-glutamine + ATP + H2O = L-glutaminyl-tRNA(Gln) + L-glutamate + ADP + phosphate + H(+). It catalyses the reaction L-aspartyl-tRNA(Asn) + L-glutamine + ATP + H2O = L-asparaginyl-tRNA(Asn) + L-glutamate + ADP + phosphate + 2 H(+). Its function is as follows. Allows the formation of correctly charged Asn-tRNA(Asn) or Gln-tRNA(Gln) through the transamidation of misacylated Asp-tRNA(Asn) or Glu-tRNA(Gln) in organisms which lack either or both of asparaginyl-tRNA or glutaminyl-tRNA synthetases. The reaction takes place in the presence of glutamine and ATP through an activated phospho-Asp-tRNA(Asn) or phospho-Glu-tRNA(Gln). The protein is Aspartyl/glutamyl-tRNA(Asn/Gln) amidotransferase subunit B of Nitrobacter winogradskyi (strain ATCC 25391 / DSM 10237 / CIP 104748 / NCIMB 11846 / Nb-255).